We begin with the raw amino-acid sequence, 365 residues long: tRNA(Met) cytidine acetate ligase (365 aa).

ATP is bound by residues 7 to 20 (IAEF…HKYL), Gly96, Asn152, and Arg175.

This sequence belongs to the TmcAL family.

It is found in the cytoplasm. The enzyme catalyses cytidine(34) in elongator tRNA(Met) + acetate + ATP = N(4)-acetylcytidine(34) in elongator tRNA(Met) + AMP + diphosphate. Catalyzes the formation of N(4)-acetylcytidine (ac(4)C) at the wobble position of elongator tRNA(Met), using acetate and ATP as substrates. First activates an acetate ion to form acetyladenylate (Ac-AMP) and then transfers the acetyl group to tRNA to form ac(4)C34. The sequence is that of tRNA(Met) cytidine acetate ligase from Streptococcus pneumoniae (strain 70585).